The sequence spans 190 residues: MSEGKLFYVIGPSGSGKDSLMRYGRERLAGDPGVVFAHRYITRPVELHGENHVALTEDEFDARLATGLFALHWDSHGLRYGIGREINLWLAKGCNVVLNGSREYLPEARRRYPGLTAILVNVSPEVLAERLRARGRETEDQISRRVARAKQFMHPEGRLEVIANDAELHVAGERLVQLLSDADASKRAFA.

Position 11–18 (11–18 (GPSGSGKD)) interacts with ATP.

This sequence belongs to the ribose 1,5-bisphosphokinase family.

It catalyses the reaction alpha-D-ribose 1,5-bisphosphate + ATP = 5-phospho-alpha-D-ribose 1-diphosphate + ADP. The protein operates within metabolic intermediate biosynthesis; 5-phospho-alpha-D-ribose 1-diphosphate biosynthesis; 5-phospho-alpha-D-ribose 1-diphosphate from D-ribose 5-phosphate (route II): step 3/3. In terms of biological role, catalyzes the phosphorylation of ribose 1,5-bisphosphate to 5-phospho-D-ribosyl alpha-1-diphosphate (PRPP). The protein is Ribose 1,5-bisphosphate phosphokinase PhnN of Thiobacillus denitrificans (strain ATCC 25259 / T1).